The following is a 209-amino-acid chain: 7-carboxy-7-deazaguanine synthase (209 aa).

Substrate is bound by residues 10–12 (IQG) and arginine 25. The region spanning 16-205 (YAGLPMLFVR…PQIHKIIYGD (190 aa)) is the Radical SAM core domain. [4Fe-4S] cluster is bound by residues cysteine 29, cysteine 33, and cysteine 36. Threonine 38 provides a ligand contact to Mg(2+). Threonine 68 is a binding site for substrate. S-adenosyl-L-methionine is bound at residue glycine 70.

The protein belongs to the radical SAM superfamily. 7-carboxy-7-deazaguanine synthase family. In terms of assembly, homodimer. Requires [4Fe-4S] cluster as cofactor. The cofactor is S-adenosyl-L-methionine. Mg(2+) is required as a cofactor.

The catalysed reaction is 6-carboxy-5,6,7,8-tetrahydropterin + H(+) = 7-carboxy-7-deazaguanine + NH4(+). Its pathway is purine metabolism; 7-cyano-7-deazaguanine biosynthesis. Catalyzes the complex heterocyclic radical-mediated conversion of 6-carboxy-5,6,7,8-tetrahydropterin (CPH4) to 7-carboxy-7-deazaguanine (CDG), a step common to the biosynthetic pathways of all 7-deazapurine-containing compounds. This Thermoplasma acidophilum (strain ATCC 25905 / DSM 1728 / JCM 9062 / NBRC 15155 / AMRC-C165) protein is 7-carboxy-7-deazaguanine synthase.